The primary structure comprises 107 residues: UPF0060 membrane protein A1S_1909 (107 aa).

The next 4 helical transmembrane spans lie at 2 to 22 (FGLFIITAIAEILGCYFPYLI), 28 to 48 (SAWLWLPTALSLAVFVWLLTL), 56 to 76 (IYAAYGGIYIFTALMWLRFVD), and 85 to 105 (ILGGVIVLCGAGLIILQPQGL).

This sequence belongs to the UPF0060 family.

The protein resides in the cell inner membrane. This is UPF0060 membrane protein A1S_1909 from Acinetobacter baumannii (strain ATCC 17978 / DSM 105126 / CIP 53.77 / LMG 1025 / NCDC KC755 / 5377).